Consider the following 1192-residue polypeptide: Protein argonaute 13 (1192 aa).

Positions 183–296 (TVIQFVEEFL…LPMEVCKIVE (114 aa)) constitute a PAZ domain. A Piwi domain is found at 472–770 (LLIVILLEVS…AASHAHCCIK (299 aa)).

The protein belongs to the argonaute family. Ago subfamily.

In terms of biological role, probably involved in the RNA silencing pathway. May bind to short RNAs such as microRNAs (miRNAs) or short interfering RNAs (siRNAs), and represses the translation of mRNAs which are complementary to them. This Oryza sativa subsp. japonica (Rice) protein is Protein argonaute 13 (AGO13).